Consider the following 520-residue polypeptide: GMP synthase [glutamine-hydrolyzing] (520 aa).

The Glutamine amidotransferase type-1 domain occupies 9–202 (KILILDFGSQ…VRKICGCSGK (194 aa)). Cys-86 functions as the Nucleophile in the catalytic mechanism. Active-site residues include His-176 and Glu-178. The GMPS ATP-PPase domain occupies 203-395 (WTPGQIIEDA…LGLPHQMVWR (193 aa)). 230 to 236 (SGGVDSS) lines the ATP pocket.

In terms of assembly, homodimer.

It carries out the reaction XMP + L-glutamine + ATP + H2O = GMP + L-glutamate + AMP + diphosphate + 2 H(+). The protein operates within purine metabolism; GMP biosynthesis; GMP from XMP (L-Gln route): step 1/1. Its function is as follows. Catalyzes the synthesis of GMP from XMP. This Geotalea daltonii (strain DSM 22248 / JCM 15807 / FRC-32) (Geobacter daltonii) protein is GMP synthase [glutamine-hydrolyzing].